The chain runs to 291 residues: UPF0173 metal-dependent hydrolase Rmet_5695 (291 aa).

The protein belongs to the UPF0173 family.

The protein is UPF0173 metal-dependent hydrolase Rmet_5695 of Cupriavidus metallidurans (strain ATCC 43123 / DSM 2839 / NBRC 102507 / CH34) (Ralstonia metallidurans).